The primary structure comprises 452 residues: Friend leukemia integration 1 transcription factor (452 aa).

At serine 39 the chain carries Phosphoserine. The PNT domain occupies 112–198; sequence PPPPNMTTNE…SHLSYLRESS (87 aa). The segment at 209–271 is disordered; it reads DQSSRLSVKE…PYQILGPTSS (63 aa). Residues 215–226 are compositionally biased toward basic and acidic residues; that stretch reads SVKEDPSYDSVR. Residues 248 to 257 show a composition bias toward polar residues; that stretch reads QTISKNTEQR. Positions 281-361 form a DNA-binding region, ETS; that stretch reads IQLWQFLLEL…HGKRYAYKFD (81 aa). The tract at residues 433–452 is disordered; it reads NPNVPRHPNTHVPSHLGSYY.

Belongs to the ETS family. As to quaternary structure, can form homodimers or heterodimers with ETV6/TEL1.

The protein localises to the nucleus. In terms of biological role, sequence-specific transcriptional activator. Recognizes the DNA sequence 5'-C[CA]GGAAGT-3'. The protein is Friend leukemia integration 1 transcription factor (FLI1) of Homo sapiens (Human).